We begin with the raw amino-acid sequence, 390 residues long: ATP-sensitive inward rectifier potassium channel 11 (390 aa).

Residues 1–65 (MLSRKGIIPE…LQDVFTTLVD (65 aa)) lie on the Cytoplasmic side of the membrane. ATP is bound by residues Asn-48 and Arg-50. The chain crosses the membrane as a helical span at residues 66–92 (LKWPHTLLIFTMSFLCSWLLFAMVWWL). The Extracellular segment spans residues 93–116 (IAFAHGDLAPGEGTTVPCVTSIHS). Residues Cys-110 and Cys-142 are joined by a disulfide bond. An intramembrane region (discontinuously helical; Pore-forming) is located at residues 117–133 (FSSAFLFSIEVQVTIGF). K(+) contacts are provided by Thr-130 and Phe-133. Positions 130–135 (TIGFGG) match the Selectivity filter motif. Residues 134-142 (GGRMVTEEC) are Extracellular-facing. Residues 143-171 (PLAILILIVQNIVGLMINAIMLGCIFMKT) form a helical membrane-spanning segment. Topologically, residues 172 to 390 (SQAHRRAETL…RFSISPDSLS (219 aa)) are cytoplasmic. Arg-176 serves as a coordination point for a 1,2-diacyl-sn-glycero-3-phospho-(1D-myo-inositol-4,5-bisphosphate). Tyr-330 serves as a coordination point for ATP. Position 341 is a phosphothreonine; by MAPK1 (Thr-341). Ser-385 is modified (phosphoserine; by MAPK1).

This sequence belongs to the inward rectifier-type potassium channel (TC 1.A.2.1) family. KCNJ11 subfamily. Homotetramer; the homotetramer binds four ATP molecules (one ATP per subunit). Forms an heterooctamer with ABCC8/SUR1; one KCNJ11 homotetramer interacts with four ABCC8/SUR1 molecules. Interacts with ABCC9/SUR2. Post-translationally, phosphorylation by MAPK1 results in changes in channel gating that destabilize the closed states and reduce the ATP sensitivity.

It localises to the membrane. It carries out the reaction K(+)(in) = K(+)(out). KATP channels are regulated by cytoplasmic ATP/ADP ratios; ATP inhibits the channel by closing the pore, while ADP activates the channel. Activated by phosphatidylinositol 4,5-biphosphate (PtdIns(4,5)P2). Inward rectifier potassium channel that forms the pore of ATP-sensitive potassium channels (KATP), regulating potassium permeability as a function of cytoplasmic ATP and ADP concentrations in many different cells. Inward rectifier potassium channels are characterized by a greater tendency to allow potassium to flow into the cell rather than out of it. Their voltage dependence is regulated by the concentration of extracellular potassium; as external potassium is raised, the voltage range of the channel opening shifts to more positive voltages. The inward rectification is mainly due to the blockage of outward current by internal magnesium. Can be blocked by extracellular barium. In pancreatic cells, it forms KATP channels with ABCC8/SUR1. Can form cardiac and smooth muscle-type KATP channels with ABCC9. The chain is ATP-sensitive inward rectifier potassium channel 11 (KCNJ11) from Cavia porcellus (Guinea pig).